A 337-amino-acid chain; its full sequence is ATP-dependent 6-phosphofructokinase (337 aa).

Gly11 serves as a coordination point for ATP. 21-25 (RAVVR) is an ADP binding site. Residues 72–73 (RY) and 102–105 (GDGS) each bind ATP. Residue Asp103 coordinates Mg(2+). 125-127 (TID) contributes to the substrate binding site. The active-site Proton acceptor is Asp127. Arg154 contacts ADP. Residues Arg162 and 169–171 (MGR) each bind substrate. ADP contacts are provided by residues 185–187 (GAD), Lys212, and 214–216 (KNH). Substrate-binding positions include Glu223, Arg245, and 251–254 (HILR).

It belongs to the phosphofructokinase type A (PFKA) family. ATP-dependent PFK group I subfamily. Prokaryotic clade 'B1' sub-subfamily. Homotetramer. Mg(2+) serves as cofactor.

The protein resides in the cytoplasm. It catalyses the reaction beta-D-fructose 6-phosphate + ATP = beta-D-fructose 1,6-bisphosphate + ADP + H(+). It participates in carbohydrate degradation; glycolysis; D-glyceraldehyde 3-phosphate and glycerone phosphate from D-glucose: step 3/4. With respect to regulation, allosterically activated by ADP and other diphosphonucleosides, and allosterically inhibited by phosphoenolpyruvate. Functionally, catalyzes the phosphorylation of D-fructose 6-phosphate to fructose 1,6-bisphosphate by ATP, the first committing step of glycolysis. The protein is ATP-dependent 6-phosphofructokinase of Streptococcus pyogenes serotype M28 (strain MGAS6180).